The chain runs to 217 residues: Probable GTP-binding protein EngB (217 aa).

The region spanning 32–205 is the EngB-type G domain; it reads GTPQIAFAGR…RKIVYSLIET (174 aa). GTP contacts are provided by residues 40–47, 67–71, 85–88, 152–155, and 184–186; these read GRSNAGKS, GKTKL, DLPG, TKID, and VSN. Mg(2+) is bound by residues S47 and T69.

The protein belongs to the TRAFAC class TrmE-Era-EngA-EngB-Septin-like GTPase superfamily. EngB GTPase family. Mg(2+) is required as a cofactor.

In terms of biological role, necessary for normal cell division and for the maintenance of normal septation. The sequence is that of Probable GTP-binding protein EngB from Leptospira interrogans serogroup Icterohaemorrhagiae serovar copenhageni (strain Fiocruz L1-130).